The following is a 368-amino-acid chain: Alanine racemase 3 (368 aa).

The Proton acceptor; specific for D-alanine role is filled by K42. An N6-(pyridoxal phosphate)lysine modification is found at K42. A substrate-binding site is contributed by R141. Y262 acts as the Proton acceptor; specific for L-alanine in catalysis. Residue M310 participates in substrate binding.

The protein belongs to the alanine racemase family. It depends on pyridoxal 5'-phosphate as a cofactor.

It catalyses the reaction L-alanine = D-alanine. It functions in the pathway amino-acid biosynthesis; D-alanine biosynthesis; D-alanine from L-alanine: step 1/1. Its function is as follows. Catalyzes the interconversion of L-alanine and D-alanine. May also act on other amino acids. The sequence is that of Alanine racemase 3 (alr3) from Salmonella typhi.